A 448-amino-acid polypeptide reads, in one-letter code: tRNA modification GTPase MnmE (448 aa).

3 residues coordinate (6S)-5-formyl-5,6,7,8-tetrahydrofolate: arginine 25, glutamate 82, and lysine 121. In terms of domain architecture, TrmE-type G spans 217-372 (GLTTVIAGRP…LRQEIIRRAG (156 aa)). Residue asparagine 227 coordinates K(+). GTP is bound by residues 227–232 (NVGKSS), 246–252 (TEIPGTT), 271–274 (DTAG), and 353–355 (SAR). Mg(2+) is bound at residue serine 231. K(+) is bound by residues threonine 246, isoleucine 248, and threonine 251. Residue threonine 252 participates in Mg(2+) binding. Lysine 448 lines the (6S)-5-formyl-5,6,7,8-tetrahydrofolate pocket.

The protein belongs to the TRAFAC class TrmE-Era-EngA-EngB-Septin-like GTPase superfamily. TrmE GTPase family. Homodimer. Heterotetramer of two MnmE and two MnmG subunits. It depends on K(+) as a cofactor.

It is found in the cytoplasm. Exhibits a very high intrinsic GTPase hydrolysis rate. Involved in the addition of a carboxymethylaminomethyl (cmnm) group at the wobble position (U34) of certain tRNAs, forming tRNA-cmnm(5)s(2)U34. The chain is tRNA modification GTPase MnmE from Methylococcus capsulatus (strain ATCC 33009 / NCIMB 11132 / Bath).